Here is a 536-residue protein sequence, read N- to C-terminus: Cytochrome P450 monooxygenase fscF (536 aa).

A helical membrane pass occupies residues 9–29 (VSWLCALFTAIALYCIAVAFY). Residue Cys-464 participates in heme binding.

The protein belongs to the cytochrome P450 family. Heme is required as a cofactor.

Its subcellular location is the membrane. It functions in the pathway secondary metabolite biosynthesis. Its function is as follows. Cytochrome P450 monooxygenase; part of the fragmented gene cluster that mediates the biosynthesis of fusarochromene, a tryptophan-derived metabolite closely related to a group of mycotoxins including fusarochromanone. Within the pathway, fscF catalyzes the epoxidation of desacetylfusarochromene which opens the way to the production of fusarochromanones. The first step of the pathway is the epimerization of L-tryptophan to D-tryptophan in the presence of the NRPS-like tryptophan epimerase fscC. D-tryptophan is subsequently hydroxylated by the tryptophan 6-hydroxylase fscE to yield 6-hydroxytryptophan. The pyrrole ring undergoes cleavaged by the tryptophan 2,3-dioxygenase fscD and is finally converted to 4-hydroxykyrunenine by the hydrolase fscH. The NRPS-like oxidoreductase fscA reduces the carboxyl group to primary alcohol and the DMATS-type prenyltransferase fscG performs prenylation, followed by the formation of a chromene ring catalyzed by the oxidoreductase fscI, which leads to desacetylfusarochromene. Epoxidation by fscF and rearrangement reactions of chromene double bonds convert compound desacetylfusarochromene to fusarochromanones. Although specific acetyltransferases were not found near the fsc gene cluster, several predicted enzymes containing the N-acetyltransferase superfamily domain are present in the genome of F.equiseti. These predicted enzymes may have the potential to convert desacetylfusarochromene to fusarochromene. The chain is Cytochrome P450 monooxygenase fscF from Fusarium equiseti (Fusarium scirpi).